Reading from the N-terminus, the 251-residue chain is Intermembrane phospholipid transport system lipoprotein MlaA (251 aa).

The N-terminal stretch at 1-17 (MKLRLSALALGTTLLVG) is a signal peptide. A lipid anchor (N-palmitoyl cysteine) is attached at Cys-18. Residue Cys-18 is the site of S-diacylglycerol cysteine attachment. The disordered stretch occupies residues 228–251 (GELKPQENPNAQAIQDDLKDIDSE).

Belongs to the MlaA family.

The protein resides in the cell outer membrane. Functionally, involved in a phospholipid transport pathway that maintains lipid asymmetry in the outer membrane by retrograde trafficking of phospholipids from the outer membrane to the inner membrane. Required for intercellular spreading of S.flexneri. This chain is Intermembrane phospholipid transport system lipoprotein MlaA, found in Shigella flexneri.